A 209-amino-acid polypeptide reads, in one-letter code: MSKGLLISIEGPDGAGKTSVLKVLLPRLREVYPAQVITTREPGGVAIAEQIREVILDIDNTAMDAKTELLLYIAARRQHLVEKVLPELENGNMVIMDRFIDSSVAYQGAGRGLDQDEVAWLNNYATDGHKPDLTLLFDVDSETGLARIAANGEREVNRLDLEKLDMHQRVRQGYLDLAEAEPERIKRIDASQTLEEVVEDTWEIIKSYL.

11–18 (GPDGAGKT) serves as a coordination point for ATP.

It belongs to the thymidylate kinase family.

It carries out the reaction dTMP + ATP = dTDP + ADP. Its function is as follows. Phosphorylation of dTMP to form dTDP in both de novo and salvage pathways of dTTP synthesis. The polypeptide is Thymidylate kinase (Streptococcus thermophilus (strain ATCC BAA-250 / LMG 18311)).